The primary structure comprises 362 residues: Phosphoserine aminotransferase (362 aa).

R43 contributes to the L-glutamate binding site. Residues 77 to 78, W103, T153, D173, and Q196 contribute to the pyridoxal 5'-phosphate site; that span reads AS. The residue at position 197 (K197) is an N6-(pyridoxal phosphate)lysine. 238 to 239 contributes to the pyridoxal 5'-phosphate binding site; the sequence is NT.

It belongs to the class-V pyridoxal-phosphate-dependent aminotransferase family. SerC subfamily. As to quaternary structure, homodimer. Pyridoxal 5'-phosphate serves as cofactor.

It is found in the cytoplasm. It carries out the reaction O-phospho-L-serine + 2-oxoglutarate = 3-phosphooxypyruvate + L-glutamate. The enzyme catalyses 4-(phosphooxy)-L-threonine + 2-oxoglutarate = (R)-3-hydroxy-2-oxo-4-phosphooxybutanoate + L-glutamate. The protein operates within amino-acid biosynthesis; L-serine biosynthesis; L-serine from 3-phospho-D-glycerate: step 2/3. Its function is as follows. Catalyzes the reversible conversion of 3-phosphohydroxypyruvate to phosphoserine and of 3-hydroxy-2-oxo-4-phosphonooxybutanoate to phosphohydroxythreonine. The chain is Phosphoserine aminotransferase from Lysinibacillus sphaericus (strain C3-41).